We begin with the raw amino-acid sequence, 412 residues long: Subtilisin-like protease 6 (412 aa).

Positions 1–20 (MGFITKAIPIVLAALSTVNG) are cleaved as a signal peptide. Positions 21–127 (AKILEAGPHA…VRTSTNGTNL (107 aa)) are excised as a propeptide. In terms of domain architecture, Inhibitor I9 spans 36–120 (KYIVVMKREV…YIEPDFVVRT (85 aa)). N-linked (GlcNAc...) asparagine glycosylation is found at Asn123 and Asn126. The Peptidase S8 domain maps to 135 to 412 (SWGLARVSSK…SKLIYNGSGK (278 aa)). Residues Asp167 and His198 each act as charge relay system in the active site. Asn252 and Asn264 each carry an N-linked (GlcNAc...) asparagine glycan. The active-site Charge relay system is Ser358. The N-linked (GlcNAc...) asparagine glycan is linked to Asn408.

It belongs to the peptidase S8 family.

It localises to the secreted. Its function is as follows. Secreted subtilisin-like serine protease with keratinolytic activity that contributes to pathogenicity. The chain is Subtilisin-like protease 6 (SUB6) from Trichophyton tonsurans (Scalp ringworm fungus).